Consider the following 271-residue polypeptide: Phosphonates import ATP-binding protein PhnC 2 (271 aa).

Positions Leu-2–Glu-246 constitute an ABC transporter domain. Residue Gly-35–Ser-42 coordinates ATP. Over residues Arg-243–Pro-254 the composition is skewed to basic and acidic residues. A disordered region spans residues Arg-243 to Asp-271.

The protein belongs to the ABC transporter superfamily. Phosphonates importer (TC 3.A.1.9.1) family. The complex is composed of two ATP-binding proteins (PhnC), two transmembrane proteins (PhnE) and a solute-binding protein (PhnD).

The protein localises to the cell membrane. It catalyses the reaction phosphonate(out) + ATP + H2O = phosphonate(in) + ADP + phosphate + H(+). Part of the ABC transporter complex PhnCDE involved in phosphonates import. Responsible for energy coupling to the transport system. This is Phosphonates import ATP-binding protein PhnC 2 from Haloarcula marismortui (strain ATCC 43049 / DSM 3752 / JCM 8966 / VKM B-1809) (Halobacterium marismortui).